Here is a 195-residue protein sequence, read N- to C-terminus: dCTP deaminase (195 aa).

DCTP-binding positions include 110–115 (RSSLAR), D128, 136–138 (VLE), Y171, K178, and Q182. Residue E138 is the Proton donor/acceptor of the active site. Residues 171 to 195 (YSSRKDAKYKNQQSAVASRIDEDKE) form a disordered region.

This sequence belongs to the dCTP deaminase family. As to quaternary structure, homotrimer.

The catalysed reaction is dCTP + H2O + H(+) = dUTP + NH4(+). Its pathway is pyrimidine metabolism; dUMP biosynthesis; dUMP from dCTP (dUTP route): step 1/2. Functionally, catalyzes the deamination of dCTP to dUTP. This chain is dCTP deaminase, found in Haemophilus influenzae (strain ATCC 51907 / DSM 11121 / KW20 / Rd).